The chain runs to 392 residues: Phospho-N-acetylmuramoyl-pentapeptide-transferase (392 aa).

A run of 11 helical transmembrane segments spans residues 24–44 (YLTM…LLAG), 76–96 (TMGG…WFDL), 100–120 (FVWI…VDDW), 137–157 (YFWQ…CISE), 170–190 (WVQS…VPFF), 193–213 (VSYP…IVGA), 225–245 (GLAI…AYVT), 262–282 (SGEL…FLWF), 289–309 (VFMG…IAVI), 314–334 (IVLA…MLQV), and 369–389 (QVVI…LSTL).

The protein belongs to the glycosyltransferase 4 family. MraY subfamily. Requires Mg(2+) as cofactor.

The protein resides in the cell inner membrane. It catalyses the reaction UDP-N-acetyl-alpha-D-muramoyl-L-alanyl-gamma-D-glutamyl-meso-2,6-diaminopimeloyl-D-alanyl-D-alanine + di-trans,octa-cis-undecaprenyl phosphate = di-trans,octa-cis-undecaprenyl diphospho-N-acetyl-alpha-D-muramoyl-L-alanyl-D-glutamyl-meso-2,6-diaminopimeloyl-D-alanyl-D-alanine + UMP. The protein operates within cell wall biogenesis; peptidoglycan biosynthesis. Catalyzes the initial step of the lipid cycle reactions in the biosynthesis of the cell wall peptidoglycan: transfers peptidoglycan precursor phospho-MurNAc-pentapeptide from UDP-MurNAc-pentapeptide onto the lipid carrier undecaprenyl phosphate, yielding undecaprenyl-pyrophosphoryl-MurNAc-pentapeptide, known as lipid I. This is Phospho-N-acetylmuramoyl-pentapeptide-transferase from Delftia acidovorans (strain DSM 14801 / SPH-1).